A 309-amino-acid chain; its full sequence is Ribosomal RNA large subunit methyltransferase F (309 aa).

The segment at 1 to 21 (MASQHDKKSVQSGLLHPRNPH) is disordered.

Belongs to the methyltransferase superfamily. METTL16/RlmF family.

The protein localises to the cytoplasm. It carries out the reaction adenosine(1618) in 23S rRNA + S-adenosyl-L-methionine = N(6)-methyladenosine(1618) in 23S rRNA + S-adenosyl-L-homocysteine + H(+). In terms of biological role, specifically methylates the adenine in position 1618 of 23S rRNA. The polypeptide is Ribosomal RNA large subunit methyltransferase F (Desulfotalea psychrophila (strain LSv54 / DSM 12343)).